The primary structure comprises 375 residues: 23S rRNA (uracil(747)-C(5))-methyltransferase RlmC (375 aa).

Residues Cys3, Cys11, Cys14, and Cys87 each coordinate [4Fe-4S] cluster. Residues Gln212, Phe241, Glu262, and Asn307 each contribute to the S-adenosyl-L-methionine site. The Nucleophile role is filled by Cys334.

This sequence belongs to the class I-like SAM-binding methyltransferase superfamily. RNA M5U methyltransferase family. RlmC subfamily.

The catalysed reaction is uridine(747) in 23S rRNA + S-adenosyl-L-methionine = 5-methyluridine(747) in 23S rRNA + S-adenosyl-L-homocysteine + H(+). Functionally, catalyzes the formation of 5-methyl-uridine at position 747 (m5U747) in 23S rRNA. This is 23S rRNA (uracil(747)-C(5))-methyltransferase RlmC from Pectobacterium atrosepticum (strain SCRI 1043 / ATCC BAA-672) (Erwinia carotovora subsp. atroseptica).